A 177-amino-acid polypeptide reads, in one-letter code: ATP-dependent protease subunit HslV (177 aa).

Threonine 5 is an active-site residue. Residues glycine 161, cysteine 164, and threonine 167 each coordinate Na(+).

It belongs to the peptidase T1B family. HslV subfamily. A double ring-shaped homohexamer of HslV is capped on each side by a ring-shaped HslU homohexamer. The assembly of the HslU/HslV complex is dependent on binding of ATP.

The protein resides in the cytoplasm. The catalysed reaction is ATP-dependent cleavage of peptide bonds with broad specificity.. Allosterically activated by HslU binding. Its function is as follows. Protease subunit of a proteasome-like degradation complex believed to be a general protein degrading machinery. The sequence is that of ATP-dependent protease subunit HslV from Campylobacter concisus (strain 13826).